Here is a 243-residue protein sequence, read N- to C-terminus: uncharacterized protein (243 aa).

The protein belongs to the ycf23 family.

Its subcellular location is the plastid. It is found in the cyanelle. This is an uncharacterized protein from Cyanophora paradoxa.